We begin with the raw amino-acid sequence, 344 residues long: Enoyl-[acyl-carrier-protein] reductase, mitochondrial (344 aa).

The N-terminal 14 residues, 1–14 (MLKVLSLRSALQRA), are a transit peptide targeting the mitochondrion. Tyr69 serves as the catalytic Proton donor. Residues Asn142, 168 to 171 (NSAV), 191 to 193 (RSR), 255 to 258 (YGGM), 280 to 282 (FWM), and Lys338 each bind NADP(+).

This sequence belongs to the zinc-containing alcohol dehydrogenase family. Quinone oxidoreductase subfamily. As to quaternary structure, homodimer.

It is found in the mitochondrion. It catalyses the reaction a 2,3-saturated acyl-[ACP] + NADP(+) = a (2E)-enoyl-[ACP] + NADPH + H(+). Functionally, catalyzes the NADPH-dependent reduction of trans-2-enoyl thioesters in mitochondrial fatty acid synthesis (fatty acid synthesis type II). Fatty acid chain elongation in mitochondria uses acyl carrier protein (ACP) as an acyl group carrier, but the enzyme accepts both ACP and CoA thioesters as substrates in vitro. May provide the octanoyl chain used for lipoic acid biosynthesis, regulating protein lipoylation and mitochondrial respiratory activity. Involved in iron homeostasis; affecting Fe-S cluster assembly and ceramide metabolism. Required for proper morphology and bioenergetic functions of mitochondria. Required for maintenance of neurons. This is Enoyl-[acyl-carrier-protein] reductase, mitochondrial from Caenorhabditis elegans.